Here is a 65-residue protein sequence, read N- to C-terminus: uncharacterized protein (65 aa).

The protein resides in the plastid. It localises to the chloroplast. This is an uncharacterized protein from Mesostigma viride (Green alga).